A 363-amino-acid chain; its full sequence is Peptide chain release factor 1 (363 aa).

Q237 is subject to N5-methylglutamine.

The protein belongs to the prokaryotic/mitochondrial release factor family. Post-translationally, methylated by PrmC. Methylation increases the termination efficiency of RF1.

Its subcellular location is the cytoplasm. Its function is as follows. Peptide chain release factor 1 directs the termination of translation in response to the peptide chain termination codons UAG and UAA. The polypeptide is Peptide chain release factor 1 (Hydrogenovibrio crunogenus (strain DSM 25203 / XCL-2) (Thiomicrospira crunogena)).